A 192-amino-acid polypeptide reads, in one-letter code: Signal peptidase complex catalytic subunit sec11 (192 aa).

At Met1–Gln18 the chain is on the cytoplasmic side. A helical; Signal-anchor for type II membrane protein transmembrane segment spans residues Val19–Phe39. Residues Thr40–Gln192 lie on the Lumenal side of the membrane. Catalysis depends on charge relay system residues Ser53, His92, and Asp133. The tract at residues Val177 to Leu188 is C-terminal short (CTS) helix.

Belongs to the peptidase S26B family. In terms of assembly, component of the signal peptidase complex (SPC) composed of a catalytic subunit SEC11 and three accessory subunits SPC1, SPC2 and SPC3. The complex induces a local thinning of the ER membrane which is used to measure the length of the signal peptide (SP) h-region of protein substrates. This ensures the selectivity of the complex towards h-regions shorter than 18-20 amino acids. SPC associates with the translocon complex.

It is found in the endoplasmic reticulum membrane. It catalyses the reaction Cleavage of hydrophobic, N-terminal signal or leader sequences from secreted and periplasmic proteins.. In terms of biological role, catalytic component of the signal peptidase complex (SPC) which catalyzes the cleavage of N-terminal signal sequences from nascent proteins as they are translocated into the lumen of the endoplasmic reticulum. Specifically cleaves N-terminal signal peptides that contain a hydrophobic alpha-helix (h-region) shorter than 18-20 amino acids. The chain is Signal peptidase complex catalytic subunit sec11 (sec11) from Aspergillus clavatus (strain ATCC 1007 / CBS 513.65 / DSM 816 / NCTC 3887 / NRRL 1 / QM 1276 / 107).